We begin with the raw amino-acid sequence, 675 residues long: UvrABC system protein B (675 aa).

One can recognise a Helicase ATP-binding domain in the interval Glu32 to Val417. Residue Gly45–Thr52 coordinates ATP. The Beta-hairpin signature appears at Tyr98–Ile121. Residues Gln436–Ile602 form the Helicase C-terminal domain. Positions Ile634 to Asn669 constitute a UVR domain.

This sequence belongs to the UvrB family. As to quaternary structure, forms a heterotetramer with UvrA during the search for lesions. Interacts with UvrC in an incision complex.

The protein resides in the cytoplasm. The UvrABC repair system catalyzes the recognition and processing of DNA lesions. A damage recognition complex composed of 2 UvrA and 2 UvrB subunits scans DNA for abnormalities. Upon binding of the UvrA(2)B(2) complex to a putative damaged site, the DNA wraps around one UvrB monomer. DNA wrap is dependent on ATP binding by UvrB and probably causes local melting of the DNA helix, facilitating insertion of UvrB beta-hairpin between the DNA strands. Then UvrB probes one DNA strand for the presence of a lesion. If a lesion is found the UvrA subunits dissociate and the UvrB-DNA preincision complex is formed. This complex is subsequently bound by UvrC and the second UvrB is released. If no lesion is found, the DNA wraps around the other UvrB subunit that will check the other stand for damage. This is UvrABC system protein B from Neisseria meningitidis serogroup A / serotype 4A (strain DSM 15465 / Z2491).